The sequence spans 227 residues: UPF0173 metal-dependent hydrolase BT9727_4343 (227 aa).

This sequence belongs to the UPF0173 family.

The polypeptide is UPF0173 metal-dependent hydrolase BT9727_4343 (Bacillus thuringiensis subsp. konkukian (strain 97-27)).